Here is a 566-residue protein sequence, read N- to C-terminus: Cytochrome c oxidase subunit 1 (566 aa).

7 consecutive transmembrane segments (helical) span residues 29-49 (IGVL…AFTV), 97-117 (VMIT…ALFG), 141-161 (LSYW…FAPG), 189-209 (LAIF…INMI), 227-247 (LFAW…PVLA), 278-298 (ILWF…FGIV), and 310-330 (IFGY…GFVV). Position 102 (H102) interacts with Fe(II)-heme a. Cu cation contacts are provided by H284 and Y288. The 1'-histidyl-3'-tyrosine (His-Tyr) cross-link spans 284 to 288 (HPEVY). Positions 333 and 334 each coordinate Cu cation. 2 consecutive transmembrane segments (helical) span residues 348–368 (FMMA…SWIA) and 381–401 (MLWA…GIVL). Residue H419 coordinates heme a3. The next 3 helical transmembrane spans lie at 420–440 (FHYV…YFWI), 455–475 (LHFW…HFLG), and 499–519 (LGAF…FYTL). Residue H421 coordinates Fe(II)-heme a. Residues 543–566 (TSPPPEHTFEQLPKREDWERAPAH) are disordered. Basic and acidic residues predominate over residues 549–566 (HTFEQLPKREDWERAPAH).

This sequence belongs to the heme-copper respiratory oxidase family. Cu(2+) serves as cofactor. Heme is required as a cofactor.

It is found in the cell membrane. It carries out the reaction 4 Fe(II)-[cytochrome c] + O2 + 8 H(+)(in) = 4 Fe(III)-[cytochrome c] + 2 H2O + 4 H(+)(out). Its pathway is energy metabolism; oxidative phosphorylation. In terms of biological role, cytochrome c oxidase is the component of the respiratory chain that catalyzes the reduction of oxygen to water. Subunits 1-3 form the functional core of the enzyme complex. Co I is the catalytic subunit of the enzyme. Electrons originating in cytochrome c are transferred via the copper A center of subunit 2 and heme a of subunit 1 to the bimetallic center formed by heme a3 and copper B. This cytochrome c oxidase shows proton pump activity across the membrane in addition to the electron transfer. The polypeptide is Cytochrome c oxidase subunit 1 (ctaD) (Cereibacter sphaeroides (Rhodobacter sphaeroides)).